The sequence spans 209 residues: Ribosomal RNA large subunit methyltransferase E (209 aa).

S-adenosyl-L-methionine contacts are provided by Gly63, Trp65, Asp83, Asp99, and Asp124. Lys164 acts as the Proton acceptor in catalysis.

The protein belongs to the class I-like SAM-binding methyltransferase superfamily. RNA methyltransferase RlmE family.

Its subcellular location is the cytoplasm. The enzyme catalyses uridine(2552) in 23S rRNA + S-adenosyl-L-methionine = 2'-O-methyluridine(2552) in 23S rRNA + S-adenosyl-L-homocysteine + H(+). In terms of biological role, specifically methylates the uridine in position 2552 of 23S rRNA at the 2'-O position of the ribose in the fully assembled 50S ribosomal subunit. The sequence is that of Ribosomal RNA large subunit methyltransferase E from Pectobacterium atrosepticum (strain SCRI 1043 / ATCC BAA-672) (Erwinia carotovora subsp. atroseptica).